Consider the following 105-residue polypeptide: Large ribosomal subunit protein uL24 (105 aa).

Belongs to the universal ribosomal protein uL24 family. Part of the 50S ribosomal subunit.

Functionally, one of two assembly initiator proteins, it binds directly to the 5'-end of the 23S rRNA, where it nucleates assembly of the 50S subunit. In terms of biological role, one of the proteins that surrounds the polypeptide exit tunnel on the outside of the subunit. In Nitrosomonas europaea (strain ATCC 19718 / CIP 103999 / KCTC 2705 / NBRC 14298), this protein is Large ribosomal subunit protein uL24.